The sequence spans 321 residues: Cytochrome c biogenesis protein CcsA (321 aa).

Helical transmembrane passes span 12-32 (HISFSIISIVIIIHLMNLLVY), 45-62 (MIATFSSITGFLVTRWIS), 71-91 (LYESLIFLSWSLSIIHIILYI), 98-117 (LNAITAPSAIFTQGFATSGL), 143-163 (MLLSYAALLCGSLLSVALIVI), 227-247 (VISLGFTFLTIGILSGAVWAN), 260-277 (ETWAFITWTIFAIYLHTR), and 292-312 (VASIGFLLIWICYFGINLLGI).

It belongs to the CcmF/CycK/Ccl1/NrfE/CcsA family. In terms of assembly, may interact with Ccs1.

The protein resides in the plastid. The protein localises to the chloroplast thylakoid membrane. In terms of biological role, required during biogenesis of c-type cytochromes (cytochrome c6 and cytochrome f) at the step of heme attachment. In Phalaenopsis aphrodite subsp. formosana (Moth orchid), this protein is Cytochrome c biogenesis protein CcsA.